The sequence spans 766 residues: BMP/retinoic acid-inducible neural-specific protein 3 (766 aa).

Residues 1–33 form the signal peptide; that stretch reads MIWRRRAGAELSSLMALWEWIVLSLHCWVLAVA. The MACPF domain maps to 74–264; the sequence is RYKIYREFGR…FVQAALSYIA (191 aa). Residues Asn168, Asn337, Asn456, Asn562, Asn609, and Asn641 are each glycosylated (N-linked (GlcNAc...) asparagine).

The protein belongs to the BRINP family. Expressed in the brain. Weakly expressed in embryonic stem (ES) cells. Expressed in ES-derived neural stem cells (NSCs) and neuronal cells.

Its subcellular location is the secreted. The protein localises to the mitochondrion. Inhibits neuronal cell proliferation by negative regulation of the cell cycle transition. Promotes pituitary gonadotrope cell proliferation, migration and invasion, when overexpressed. May play a role in cell pituitary tumor development. The protein is BMP/retinoic acid-inducible neural-specific protein 3 (Brinp3) of Mus musculus (Mouse).